The following is a 475-amino-acid chain: UDP-N-acetylmuramate--L-alanine ligase (475 aa).

Position 125–131 (125–131) interacts with ATP; that stretch reads GTHGKTS.

This sequence belongs to the MurCDEF family.

Its subcellular location is the cytoplasm. It carries out the reaction UDP-N-acetyl-alpha-D-muramate + L-alanine + ATP = UDP-N-acetyl-alpha-D-muramoyl-L-alanine + ADP + phosphate + H(+). The protein operates within cell wall biogenesis; peptidoglycan biosynthesis. Functionally, cell wall formation. In Mycolicibacterium gilvum (strain PYR-GCK) (Mycobacterium gilvum (strain PYR-GCK)), this protein is UDP-N-acetylmuramate--L-alanine ligase.